The chain runs to 592 residues: UvrABC system protein C (592 aa).

The region spanning 15–92 (ALPGCYLMKD…IQKHQPYFNI (78 aa)) is the GIY-YIG domain. The UVR domain maps to 197 to 232 (DNVKKDLTEKMATAAQEMQFERAAELRDQLRYIEAT).

Belongs to the UvrC family. As to quaternary structure, interacts with UvrB in an incision complex.

It localises to the cytoplasm. Functionally, the UvrABC repair system catalyzes the recognition and processing of DNA lesions. UvrC both incises the 5' and 3' sides of the lesion. The N-terminal half is responsible for the 3' incision and the C-terminal half is responsible for the 5' incision. The protein is UvrABC system protein C of Latilactobacillus sakei subsp. sakei (strain 23K) (Lactobacillus sakei subsp. sakei).